Here is a 328-residue protein sequence, read N- to C-terminus: Phosphate acyltransferase (328 aa).

It belongs to the PlsX family. As to quaternary structure, homodimer. Probably interacts with PlsY.

It is found in the cytoplasm. The enzyme catalyses a fatty acyl-[ACP] + phosphate = an acyl phosphate + holo-[ACP]. The protein operates within lipid metabolism; phospholipid metabolism. Its function is as follows. Catalyzes the reversible formation of acyl-phosphate (acyl-PO(4)) from acyl-[acyl-carrier-protein] (acyl-ACP). This enzyme utilizes acyl-ACP as fatty acyl donor, but not acyl-CoA. This is Phosphate acyltransferase from Staphylococcus aureus (strain USA300).